A 1193-amino-acid polypeptide reads, in one-letter code: Probable cation-transporting ATPase 13A4 (1193 aa).

Topologically, residues 1-32 are cytoplasmic; sequence MGDHLEKSQHALLNEGDENEMEIFGYRTQGCR. The stretch at 33–53 is an intramembrane region; the sequence is KALCLIGSIFSLGMLPLVFYW. Residues 54-198 are Cytoplasmic-facing; that stretch reads RPAWRVWANC…DVEITPIWKL (145 aa). A helical transmembrane segment spans residues 199–219; sequence LIKEVLNPFYIFQLFSVCLWF. Residues 220–224 lie on the Lumenal side of the membrane; that stretch reads SEDYK. The chain crosses the membrane as a helical span at residues 225-245; it reads EYALAIILMSVISIALTVYDL. Topologically, residues 246-401 are cytoplasmic; it reads RQQSVKLHHL…NFKLYRDAIR (156 aa). A helical transmembrane segment spans residues 402 to 422; sequence FLLCLVGTATIGMVYTLCVYV. Over 423-437 the chain is Lumenal; sequence LSGEPPEEVVRKALD. The helical transmembrane segment at 438-458 threads the bilayer; it reads VITIAVPPALPAALTTGIIYA. Residues 459–901 are Cytoplasmic-facing; that stretch reads QRRLKKKGIF…KEGRAALVTS (443 aa). Catalysis depends on D487, which acts as the 4-aspartylphosphate intermediate. Mg(2+) contacts are provided by D849 and D853. Residues 902 to 922 form a helical membrane-spanning segment; the sequence is FCMFKYMALYSMIQYVGVLLL. Topologically, residues 923–933 are lumenal; sequence YWKTNSLSNYQ. The chain crosses the membrane as a helical span at residues 934 to 954; the sequence is FLFQDLAITTLIGVTMNLNGA. Residues 955-973 lie on the Cytoplasmic side of the membrane; sequence NPKLVPFRPAGRLISPPLL. The chain crosses the membrane as a helical span at residues 974 to 994; it reads LSVVLNILLSLAMHIVGFILV. Residues 995-1036 lie on the Lumenal side of the membrane; the sequence is QKQPWYIMDYHSVCPVRNESASALAASPSVPEKTRSNSTFAS. The chain crosses the membrane as a helical span at residues 1037–1057; it reads FENTTIWFLGTINCIFVALVF. The Cytoplasmic segment spans residues 1058–1071; sequence SKGKPFRQPTYTNY. A helical membrane pass occupies residues 1072–1092; sequence IFVLVLILQMGVCLFILFADI. Residues 1093 to 1105 are Lumenal-facing; the sequence is PEMHRRLDLLCTP. Residues 1106–1126 form a helical membrane-spanning segment; that stretch reads VLWRVYILIMISSNFVVSLAV. Residues 1127-1193 lie on the Cytoplasmic side of the membrane; sequence EKAIIENRAL…PVFESNEEQL (67 aa).

The protein belongs to the cation transport ATPase (P-type) (TC 3.A.3) family. Type V subfamily. As to expression, expressed in brain and stomach.

Its subcellular location is the early endosome membrane. The protein resides in the late endosome membrane. It is found in the recycling endosome membrane. The enzyme catalyses ATP + H2O = ADP + phosphate + H(+). This chain is Probable cation-transporting ATPase 13A4 (Atp13a4), found in Mus musculus (Mouse).